A 930-amino-acid polypeptide reads, in one-letter code: Translation initiation factor IF-2 (930 aa).

Residues 51–325 (PGAGKSAAKP…TREIGGVKVP (275 aa)) form a disordered region. Low complexity-rich tracts occupy residues 56–111 (SAAK…KPGV) and 121–162 (TPAA…GNNP). Residues 263–295 (RPGGGPGGGPGRPGGPGGRGGRGNAQGAFGRGG) are compositionally biased toward gly residues. Basic residues predominate over residues 296–307 (GPRKGRKSKRAK). A compositionally biased stretch (basic and acidic residues) spans 308 to 320 (RQEFEQQHTREIG). A tr-type G domain is found at 422–596 (PRPAVVTVMG…LTADAALELT (175 aa)). Positions 431–438 (GHVDHGKT) are G1. Position 431–438 (431–438 (GHVDHGKT)) interacts with GTP. The G2 stretch occupies residues 456–460 (GITQH). Residues 481–484 (DTPG) form a G3 region. GTP-binding positions include 481–485 (DTPGH) and 535–538 (NKID). A G4 region spans residues 535 to 538 (NKID). The tract at residues 571 to 573 (SAR) is G5.

This sequence belongs to the TRAFAC class translation factor GTPase superfamily. Classic translation factor GTPase family. IF-2 subfamily.

The protein resides in the cytoplasm. In terms of biological role, one of the essential components for the initiation of protein synthesis. Protects formylmethionyl-tRNA from spontaneous hydrolysis and promotes its binding to the 30S ribosomal subunits. Also involved in the hydrolysis of GTP during the formation of the 70S ribosomal complex. This chain is Translation initiation factor IF-2, found in Micrococcus luteus (strain ATCC 4698 / DSM 20030 / JCM 1464 / CCM 169 / CCUG 5858 / IAM 1056 / NBRC 3333 / NCIMB 9278 / NCTC 2665 / VKM Ac-2230) (Micrococcus lysodeikticus).